The primary structure comprises 265 residues: Putative hydro-lyase Teth514_1597 (265 aa).

The protein belongs to the D-glutamate cyclase family.

The polypeptide is Putative hydro-lyase Teth514_1597 (Thermoanaerobacter sp. (strain X514)).